The sequence spans 157 residues: Small ribosomal subunit protein uS7 (157 aa).

The protein belongs to the universal ribosomal protein uS7 family. As to quaternary structure, part of the 30S ribosomal subunit. Contacts proteins S9 and S11.

In terms of biological role, one of the primary rRNA binding proteins, it binds directly to 16S rRNA where it nucleates assembly of the head domain of the 30S subunit. Is located at the subunit interface close to the decoding center, probably blocks exit of the E-site tRNA. The chain is Small ribosomal subunit protein uS7 from Chlamydia pneumoniae (Chlamydophila pneumoniae).